Consider the following 157-residue polypeptide: 17.8 kDa class I heat shock protein (157 aa).

The region spanning 41-156 (ETSAITNARV…KAQVKSIDIS (116 aa)) is the sHSP domain.

The protein belongs to the small heat shock protein (HSP20) family. Homodimer under normal physiological conditions. Aggregates in high oligomeric complexes after heat shock. Binds to AKR2A and to chloroplasts. Expressed ubiquitously at low levels under normal physiological conditions.

The protein resides in the cytoplasm. Functionally, cytosolic mediator for sorting and targeting of nascent chloroplast outer envelope membrane (OEM) proteins to the chloroplast. Functions as an AKR2A cofactor to facilitate the targeting of OEP7 to chloroplasts. The protein is 17.8 kDa class I heat shock protein (HSP17.8) of Arabidopsis thaliana (Mouse-ear cress).